The primary structure comprises 319 residues: L-lactate dehydrogenase (319 aa).

NAD(+) is bound by residues 10-11, D32, R37, Y62, and 76-77; these read RV and GV. Substrate is bound by residues Q79, R85, and 117 to 120; that span reads NPVD. NAD(+) contacts are provided by residues 115–117 and S140; that span reads VTN. 145 to 148 provides a ligand contact to substrate; that stretch reads DTAR. Beta-D-fructose 1,6-bisphosphate contacts are provided by R150 and H165. Catalysis depends on H172, which acts as the Proton acceptor. Phosphotyrosine is present on Y217. T226 provides a ligand contact to substrate.

This sequence belongs to the LDH/MDH superfamily. LDH family. As to quaternary structure, homotetramer.

Its subcellular location is the cytoplasm. It catalyses the reaction (S)-lactate + NAD(+) = pyruvate + NADH + H(+). The protein operates within fermentation; pyruvate fermentation to lactate; (S)-lactate from pyruvate: step 1/1. Its activity is regulated as follows. Allosterically activated by fructose 1,6-bisphosphate (FBP). Inactivated by Mn(2+), Co(2+), Cd(2+) and Zn(2+). In terms of biological role, catalyzes the conversion of lactate to pyruvate. It is stereospecific for L(+)-lactate. The polypeptide is L-lactate dehydrogenase (Thermotoga maritima (strain ATCC 43589 / DSM 3109 / JCM 10099 / NBRC 100826 / MSB8)).